A 155-amino-acid chain; its full sequence is Small ribosomal subunit protein uS7cz/uS7cy (155 aa).

It belongs to the universal ribosomal protein uS7 family. In terms of assembly, part of the 30S ribosomal subunit.

Its subcellular location is the plastid. It localises to the chloroplast. One of the primary rRNA binding proteins, it binds directly to 16S rRNA where it nucleates assembly of the head domain of the 30S subunit. This chain is Small ribosomal subunit protein uS7cz/uS7cy (rps7-A), found in Atropa belladonna (Belladonna).